Reading from the N-terminus, the 317-residue chain is Melanocyte-stimulating hormone receptor (317 aa).

The Extracellular segment spans residues 1 to 37 (MPVQGSQRRLLGSLNSTPTATPKLGLAANQTGAWCLE). N29 carries an N-linked (GlcNAc...) asparagine glycan. Residues 38–63 (VSIPDGLFLSLGLVSLVENVLVVAAI) form a helical membrane-spanning segment. The Cytoplasmic segment spans residues 64–72 (AKNRNLHSP). The helical transmembrane segment at 73 to 93 (MYCFICCLALSDLLVSGSNML) threads the bilayer. Over 94–118 (ETAVILLLEAGALAARAAVVQQLDN) the chain is Extracellular. Residues 119–140 (VIDVITCSSMLSSLCFLGAIAV) traverse the membrane as a helical segment. Over 141–163 (DRYISIFYALRYHSIVTLPRAQR) the chain is Cytoplasmic. The helical transmembrane segment at 164 to 183 (VVAAIWVASVLFSTLFIAYY) threads the bilayer. Topologically, residues 184-191 (DHAAVLLC) are extracellular. Residues 192–211 (LVVFFLAMLVLMAVLYVHML) traverse the membrane as a helical segment. Over 212 to 240 (ARACQHAQGIAQLHKRQRPAHQGFGLKGA) the chain is Cytoplasmic. A helical membrane pass occupies residues 241 to 266 (ATLTILLGIFFLCWGPFFLHLTLIVL). The Extracellular portion of the chain corresponds to 267–279 (CPQHPTCSCIFKN). A helical transmembrane segment spans residues 280-300 (FNLFLALIICNAIIDPLIYAF). The Cytoplasmic portion of the chain corresponds to 301-317 (RSQELRRTLKEVLLCSW). C315 carries S-palmitoyl cysteine lipidation.

Belongs to the G-protein coupled receptor 1 family. In terms of assembly, interacts with MGRN1, but does not undergo MGRN1-mediated ubiquitination; this interaction competes with GNAS-binding and thus inhibits agonist-induced cAMP production. Interacts with OPN3; the interaction results in a decrease in MC1R-mediated cAMP signaling and ultimately a decrease in melanin production in melanocytes.

Its subcellular location is the cell membrane. In terms of biological role, receptor for MSH (alpha, beta and gamma) and ACTH. The activity of this receptor is mediated by G proteins which activate adenylate cyclase. Mediates melanogenesis, the production of eumelanin (black/brown) and phaeomelanin (red/yellow), via regulation of cAMP signaling in melanocytes. The protein is Melanocyte-stimulating hormone receptor (MC1R) of Colobus guereza (Mantled guereza).